We begin with the raw amino-acid sequence, 192 residues long: MSEKSIVQEARDIQLAMELITLGARLQMLESETQLSRGRLIKLYKELRGSPPPKGMLPFSTDWFMTWEQNVHASMFCNAWQFLLKTGLCNGVDAVIKAYRLYLEQCPQAEEGPLLALTRAWTLVRFVESGLLQLSSCNCCGGNFITHAHQPVGSFACSLCQPPSRAVKRRKLSQNPADIIPQLLDEQRVQAV.

The Zn(2+) site is built by Cys137, Cys140, Cys157, and Cys160.

It belongs to the FlhC family. Heterohexamer composed of two FlhC and four FlhD subunits. Each FlhC binds a FlhD dimer, forming a heterotrimer, and a hexamer assembles by dimerization of two heterotrimers. It depends on Zn(2+) as a cofactor.

It localises to the cytoplasm. In terms of biological role, functions in complex with FlhD as a master transcriptional regulator that regulates transcription of several flagellar and non-flagellar operons by binding to their promoter region. Activates expression of class 2 flagellar genes, including fliA, which is a flagellum-specific sigma factor that turns on the class 3 genes. Also regulates genes whose products function in a variety of physiological pathways. This Escherichia coli O6:H1 (strain CFT073 / ATCC 700928 / UPEC) protein is Flagellar transcriptional regulator FlhC.